A 200-amino-acid chain; its full sequence is LHFPL tetraspan subfamily member 7 protein (200 aa).

4 helical membrane-spanning segments follow: residues 5–27 (VWVALGLSLTCTSAFSLISPAWF), 68–88 (VSAVMLLGGWLLLAFNAIFLL), 113–133 (AATAMIVGLLIFPIGLASPFI), and 150–170 (LGWGYMTAILNAVLASLLPII).

It belongs to the TMEM211 family.

Its subcellular location is the membrane. The protein is LHFPL tetraspan subfamily member 7 protein of Homo sapiens (Human).